The primary structure comprises 237 residues: Ribonuclease PH (237 aa).

Phosphate-binding positions include Arg86 and 124–126; that span reads GTR.

The protein belongs to the RNase PH family. In terms of assembly, homohexameric ring arranged as a trimer of dimers.

It catalyses the reaction tRNA(n+1) + phosphate = tRNA(n) + a ribonucleoside 5'-diphosphate. Functionally, phosphorolytic 3'-5' exoribonuclease that plays an important role in tRNA 3'-end maturation. Removes nucleotide residues following the 3'-CCA terminus of tRNAs; can also add nucleotides to the ends of RNA molecules by using nucleoside diphosphates as substrates, but this may not be physiologically important. Probably plays a role in initiation of 16S rRNA degradation (leading to ribosome degradation) during starvation. The polypeptide is Ribonuclease PH (Methylorubrum populi (strain ATCC BAA-705 / NCIMB 13946 / BJ001) (Methylobacterium populi)).